A 248-amino-acid chain; its full sequence is Transcription factor bHLH35 (248 aa).

Over residues 37-54 (SGSYDSSSPDGAASSPAS) the composition is skewed to low complexity. The interval 37–60 (SGSYDSSSPDGAASSPASKNIVSE) is disordered. The bHLH domain maps to 51–100 (SPASKNIVSERNRRQKLNQRLFALRSVVPNITKMDKASIIKDAISYIEGL).

As to quaternary structure, homodimer. Expressed constitutively in roots, leaves, stems, and flowers.

It is found in the nucleus. The polypeptide is Transcription factor bHLH35 (BHLH35) (Arabidopsis thaliana (Mouse-ear cress)).